A 426-amino-acid chain; its full sequence is tRNA(Ile)-lysidine synthase (426 aa).

ATP is bound at residue 19-24; sequence SGGLDS.

The protein belongs to the tRNA(Ile)-lysidine synthase family.

Its subcellular location is the cytoplasm. The enzyme catalyses cytidine(34) in tRNA(Ile2) + L-lysine + ATP = lysidine(34) in tRNA(Ile2) + AMP + diphosphate + H(+). In terms of biological role, ligates lysine onto the cytidine present at position 34 of the AUA codon-specific tRNA(Ile) that contains the anticodon CAU, in an ATP-dependent manner. Cytidine is converted to lysidine, thus changing the amino acid specificity of the tRNA from methionine to isoleucine. The protein is tRNA(Ile)-lysidine synthase of Neisseria meningitidis serogroup A / serotype 4A (strain DSM 15465 / Z2491).